Reading from the N-terminus, the 219-residue chain is Probable GTP-binding protein EngB (219 aa).

Positions 31-205 (VGVEIAFAGR…LSILNEWCHP (175 aa)) constitute an EngB-type G domain. GTP-binding positions include 39 to 46 (GRSNAGKS), 66 to 70 (GRTQL), 84 to 87 (DLPG), 151 to 154 (TKSD), and 184 to 186 (FSA). Ser-46 and Thr-68 together coordinate Mg(2+).

Belongs to the TRAFAC class TrmE-Era-EngA-EngB-Septin-like GTPase superfamily. EngB GTPase family. Requires Mg(2+) as cofactor.

Necessary for normal cell division and for the maintenance of normal septation. The protein is Probable GTP-binding protein EngB of Shewanella sp. (strain MR-7).